The sequence spans 416 residues: 3-isopropylmalate dehydratase large subunit 2 (416 aa).

Cys296, Cys356, and Cys359 together coordinate [4Fe-4S] cluster.

Belongs to the aconitase/IPM isomerase family. LeuC type 2 subfamily. Heterodimer of LeuC and LeuD. Requires [4Fe-4S] cluster as cofactor.

It catalyses the reaction (2R,3S)-3-isopropylmalate = (2S)-2-isopropylmalate. It participates in amino-acid biosynthesis; L-leucine biosynthesis; L-leucine from 3-methyl-2-oxobutanoate: step 2/4. Functionally, catalyzes the isomerization between 2-isopropylmalate and 3-isopropylmalate, via the formation of 2-isopropylmaleate. The sequence is that of 3-isopropylmalate dehydratase large subunit 2 from Archaeoglobus fulgidus (strain ATCC 49558 / DSM 4304 / JCM 9628 / NBRC 100126 / VC-16).